The sequence spans 778 residues: Endonuclease MutS2 (778 aa).

332-339 provides a ligand contact to ATP; it reads GPNTGGKT. Positions 703–778 constitute a Smr domain; sequence IDLRGKMVDE…GLGCTVVTLK (76 aa).

This sequence belongs to the DNA mismatch repair MutS family. MutS2 subfamily. In terms of assembly, homodimer. Binds to stalled ribosomes, contacting rRNA.

Its function is as follows. Endonuclease that is involved in the suppression of homologous recombination and thus may have a key role in the control of bacterial genetic diversity. Acts as a ribosome collision sensor, splitting the ribosome into its 2 subunits. Detects stalled/collided 70S ribosomes which it binds and splits by an ATP-hydrolysis driven conformational change. Acts upstream of the ribosome quality control system (RQC), a ribosome-associated complex that mediates the extraction of incompletely synthesized nascent chains from stalled ribosomes and their subsequent degradation. Probably generates substrates for RQC. This is Endonuclease MutS2 from Fusobacterium nucleatum subsp. nucleatum (strain ATCC 25586 / DSM 15643 / BCRC 10681 / CIP 101130 / JCM 8532 / KCTC 2640 / LMG 13131 / VPI 4355).